The following is a 416-amino-acid chain: Protein LAZY 1 (416 aa).

Residues 63–83 (FTFGGSGLLTIGTLGIAAVAI) traverse the membrane as a helical segment. Residues 69–75 (GLLTIGT) carry the IGT motif motif. Disordered regions lie at residues 266–306 (AAAA…GMPA) and 337–361 (KKSR…DGPL). A compositionally biased stretch (gly residues) spans 270–282 (GVGGDRAGKGGGY). The Nuclear localization signal signature appears at 278 to 295 (KGGGYKTMKKRKVKDEKG).

This sequence belongs to the LAZY family. In terms of tissue distribution, expressed specifically in the cells at the inner side of the vascular bundles of young leaf sheaths and peripheral cylinders of vascular bundles in the unelongated stems. Expressed in the leaf sheath pulvinus and the lamina joint.

The protein localises to the cell membrane. It is found in the nucleus. In terms of biological role, involved in the regulation of shoot gravitropism and tiller angle through negative regulation of basipetal polar auxin transport (PAT). Acts as positive regulator of lateral auxin transport. Promotes vertical shoot growth. LAZY1 and TAC1 play opposite functions in the regulation of tiller growth angle. The chain is Protein LAZY 1 from Oryza sativa subsp. japonica (Rice).